The sequence spans 907 residues: Probable disease resistance protein At1g58390 (907 aa).

The 313-residue stretch at 144–456 (QGDRQREMRQ…AEGISTAEDY (313 aa)) folds into the NB-ARC domain. An ATP-binding site is contributed by 190 to 197 (GMGGLGKT). LRR repeat units lie at residues 608–631 (LIHL…LGNL) and 843–868 (MPLL…RFIY).

It belongs to the disease resistance NB-LRR family.

Possible disease resistance protein. The chain is Probable disease resistance protein At1g58390 from Arabidopsis thaliana (Mouse-ear cress).